A 316-amino-acid chain; its full sequence is Pantothenate kinase (316 aa).

ATP is bound at residue 95-102 (GSVAVGKS).

This sequence belongs to the prokaryotic pantothenate kinase family.

The protein localises to the cytoplasm. It carries out the reaction (R)-pantothenate + ATP = (R)-4'-phosphopantothenate + ADP + H(+). It participates in cofactor biosynthesis; coenzyme A biosynthesis; CoA from (R)-pantothenate: step 1/5. This is Pantothenate kinase from Klebsiella pneumoniae subsp. pneumoniae (strain ATCC 700721 / MGH 78578).